The sequence spans 156 residues: Probable low-salt glycan biosynthesis epimerase Agl13 (156 aa).

Substrate is bound by residues Arg19, Glu24, 39–41 (MSY), Arg51, His54, and His109.

The protein belongs to the dTDP-4-dehydrorhamnose 3,5-epimerase family.

Its pathway is protein modification; protein glycosylation. The protein operates within cell surface structure biogenesis; S-layer biogenesis. Functionally, epimerase involved in N-glycan biosynthetic pathway that takes place under low-salt conditions (1.75 M instead of 3.4 M). Participates in the formation of the tetrasaccharide present at 'Asn-532' of S-layer glycoprotein Csg, consisting of a sulfated hexose, 2 hexoses and rhamnose. Involved in the addition of final rhamnose (sugar 4) of the tetrasaccharide on the dolichol phosphate carrier. This Haloferax volcanii (strain ATCC 29605 / DSM 3757 / JCM 8879 / NBRC 14742 / NCIMB 2012 / VKM B-1768 / DS2) (Halobacterium volcanii) protein is Probable low-salt glycan biosynthesis epimerase Agl13 (agl13).